Reading from the N-terminus, the 210-residue chain is Glutathione S-transferase P (210 aa).

Residues 2 to 81 (PPYTVVYFPV…HLGRTLGLYG (80 aa)) form the GST N-terminal domain. Tyrosine 4 carries the phosphotyrosine; by EGFR modification. Glutathione contacts are provided by residues tyrosine 8, arginine 14, tryptophan 39, lysine 45, and 52 to 53 (QL). Threonine 62 bears the Phosphothreonine mark. 65–66 (QS) is a binding site for glutathione. Positions 83–204 (DQREAALVDM…ASPEHVNLPI (122 aa)) constitute a GST C-terminal domain. N6-succinyllysine occurs at positions 103 and 116. An N6-acetyllysine modification is found at lysine 128.

This sequence belongs to the GST superfamily. Pi family. In terms of assembly, homodimer. Interacts with CDK5.

Its subcellular location is the cytoplasm. The protein localises to the mitochondrion. It is found in the nucleus. It catalyses the reaction RX + glutathione = an S-substituted glutathione + a halide anion + H(+). The catalysed reaction is prostaglandin J2 + glutathione = prostaglandin J2-S-(R)-glutathione. The enzyme catalyses prostaglandin J2 + glutathione = prostaglandin J2-S-(S)-glutathione. It carries out the reaction prostaglandin A2 + glutathione = prostaglandin A2-S-(S)-glutathione. It catalyses the reaction 11(S)-hydroxy-14(S),15(S)-epoxy-(5Z,8Z,12E)-eicosatrienoate + glutathione = (11S,15S)-dihydroxy-14(R)-S-glutathionyl-(5Z,8Z,12E)-eicosatrienoate. In terms of biological role, conjugation of reduced glutathione to a wide number of exogenous and endogenous hydrophobic electrophiles. Involved in the formation of glutathione conjugates of both prostaglandin A2 (PGA2) and prostaglandin J2 (PGJ2). Participates in the formation of novel hepoxilin regioisomers. Negatively regulates CDK5 activity via p25/p35 translocation to prevent neurodegeneration. The polypeptide is Glutathione S-transferase P (GSTP1) (Macaca mulatta (Rhesus macaque)).